A 216-amino-acid polypeptide reads, in one-letter code: tRNA (guanine-N(7)-)-methyltransferase (216 aa).

Residues E43, D68, N95, and N117 each contribute to the S-adenosyl-L-methionine site. Substrate contacts are provided by residues D153 and 190–193; that span reads TEYE.

Belongs to the class I-like SAM-binding methyltransferase superfamily. TrmB family.

It catalyses the reaction guanosine(46) in tRNA + S-adenosyl-L-methionine = N(7)-methylguanosine(46) in tRNA + S-adenosyl-L-homocysteine. It participates in tRNA modification; N(7)-methylguanine-tRNA biosynthesis. Catalyzes the formation of N(7)-methylguanine at position 46 (m7G46) in tRNA. The chain is tRNA (guanine-N(7)-)-methyltransferase from Desulfitobacterium hafniense (strain Y51).